The chain runs to 207 residues: Putative 3-methyladenine DNA glycosylase (207 aa).

It belongs to the DNA glycosylase MPG family.

This Listeria monocytogenes serotype 4a (strain HCC23) protein is Putative 3-methyladenine DNA glycosylase.